Here is a 538-residue protein sequence, read N- to C-terminus: Cytochrome P450 monooxygenase astC (538 aa).

A helical transmembrane segment spans residues 18–38 (ALMLPALVGCALLIYRAFFAI). A heme-binding site is contributed by cysteine 481.

It belongs to the cytochrome P450 family. The cofactor is heme.

Its subcellular location is the membrane. The protein operates within secondary metabolite biosynthesis; terpenoid biosynthesis. Cytochrome P450 monooxygenase; part of the gene cluster that mediates the biosynthesis of the sesquiterpenoid aspterric acid (AA), an inhibitor of dihydroxy-acid dehydratase (DHAD) effective as an herbicide. AstC catalyzes the third and last step within the pathway and converts the alpha-epoxy carboxylate intermediate produced by the cytochrome P450 monooxygenase astC from (-)daucane into the tricyclic aspterric acid. The protein is Cytochrome P450 monooxygenase astC of Aspergillus terreus (strain NIH 2624 / FGSC A1156).